Consider the following 1162-residue polypeptide: Protein OBERON 4 (1162 aa).

4 stretches are compositionally biased toward basic and acidic residues: residues 1-19 (MKRL…KNVD), 61-77 (NRDL…HRSE), 90-99 (FRSERERPNR), and 118-134 (VDDR…DRSL). Disordered regions lie at residues 1–235 (MKRL…PSCS), 251–307 (IGKS…VSQN), 321–346 (DHRD…DKDE), and 441–485 (SKTE…QSGV). Positions 135 to 146 (KSPSWSRDSPNE) are enriched in polar residues. Over residues 148 to 157 (SKFKPLDSRN) the composition is skewed to basic and acidic residues. Residues 163-182 (KSLASPTWSKDSGSEQSKSV) are compositionally biased toward polar residues. Acidic residues predominate over residues 203–213 (EMEEGELEPEP). Composition is skewed to basic and acidic residues over residues 225 to 235 (TKHDCKLPSCS), 263 to 300 (SNRE…HATE), 336 to 346 (DTVDEKGDKDE), and 441 to 457 (SKTE…KDDN). The PHD-type zinc-finger motif lies at 835–899 (ACMCLVCSNF…QFHCVACNHP (65 aa)). A coiled-coil region spans residues 1065–1161 (MKQAEAEMFQ…KMEMTKQSLA (97 aa)).

As to quaternary structure, self-interacts. Interacts with OBE1 and OBE2. Interacts with OBE3.

It is found in the nucleus. Functionally, probable transcription factor that functions redundantly with OBE3 in specification of the hypophysis and establishment of the embryonic root. Involved in the activation of ARF5/MP-dependent gene expression during embryonic root meristem initiation. Involved in shoot meristem homeostasis. This Arabidopsis thaliana (Mouse-ear cress) protein is Protein OBERON 4.